The following is a 640-amino-acid chain: Endoglucanase 1 (640 aa).

An N-terminal signal peptide occupies residues 1 to 24 (MARRGGAAASSSMANLLGVALVLA). Aspartate 94 acts as the Nucleophile in catalysis. Active-site residues include histidine 433, aspartate 485, and glutamate 494. 2 N-linked (GlcNAc...) asparagine glycosylation sites follow: asparagine 528 and asparagine 548.

It belongs to the glycosyl hydrolase 9 (cellulase E) family. In terms of tissue distribution, expressed in roots, leaf sheaths and flowers.

It is found in the secreted. The enzyme catalyses Endohydrolysis of (1-&gt;4)-beta-D-glucosidic linkages in cellulose, lichenin and cereal beta-D-glucans.. The polypeptide is Endoglucanase 1 (GLU7) (Oryza sativa subsp. japonica (Rice)).